Reading from the N-terminus, the 363-residue chain is Mannose-1-phosphate guanyltransferase (363 aa).

It belongs to the transferase hexapeptide repeat family.

Its subcellular location is the cytoplasm. The enzyme catalyses alpha-D-mannose 1-phosphate + GTP + H(+) = GDP-alpha-D-mannose + diphosphate. It participates in nucleotide-sugar biosynthesis; GDP-alpha-D-mannose biosynthesis; GDP-alpha-D-mannose from alpha-D-mannose 1-phosphate (GTP route): step 1/1. In terms of biological role, involved in cell wall synthesis where it is required for glycosylation. Involved in cell cycle progression through cell-size checkpoint. The polypeptide is Mannose-1-phosphate guanyltransferase (MPG1) (Yarrowia lipolytica (strain CLIB 122 / E 150) (Yeast)).